The sequence spans 585 residues: Polyadenylate-binding protein, cytoplasmic and nuclear (585 aa).

Residues 14 to 37 (QLKIEEQTAPTTTESETPKVETSG) are disordered. 4 RRM domains span residues 38–116 (ASLY…WSQR), 126–203 (GNIY…LHVS), 219–296 (TNVY…RAQK), and 322–399 (VNLF…IAQR). Residues 488 to 567 (GQFPRNGQQQ…AHAAYQKFKE (80 aa)) enclose the PABC domain.

This sequence belongs to the polyadenylate-binding protein type-1 family.

The protein localises to the cytoplasm. It is found in the nucleus. Binds the poly(A) tail of mRNA. Appears to be an important mediator of the multiple roles of the poly(A) tail in mRNA biogenesis, stability and translation. In the nucleus, involved in both mRNA cleavage and polyadenylation. Is also required for efficient mRNA export to the cytoplasm. Acts in concert with a poly(A)-specific nuclease (PAN) to affect poly(A) tail shortening, which may occur concomitantly with either nucleocytoplasmic mRNA transport or translational initiation. In the cytoplasm, stimulates translation initiation and regulates mRNA decay through translation termination-coupled poly(A) shortening, probably mediated by PAN. This is Polyadenylate-binding protein, cytoplasmic and nuclear (PAB1) from Eremothecium gossypii (strain ATCC 10895 / CBS 109.51 / FGSC 9923 / NRRL Y-1056) (Yeast).